The sequence spans 392 residues: MADLKKAAGGRETPQGELRSEVVEDEGPRSPVAEEPGGSGSNSSETKLSPREEEELDPRIQEELEHLNQASEEINQVELQLDEARTTYRRILQESARKLNTQGSHLGSCIEKARPYYEARRLAKEAQQETQKAALRYERAVSMHNAAREMVFVAEQGVMADKNRLDPTWQEMLNHATCKVNEAEEERLRGEREHQRVTRLCQQAEARVQALQKTLRRAIGKSRPYFELKAQFSQILEEHKAKVTELEQQVAQAKTRYSVALRNLEQISEQIHARRRGLPPHPLGPRRSSPVGAEAGPEGIEDGDSGIEGAEGGGLEEGSSLGPGPGPDTDTLSLLSLRTVASDLQKCDSVEHLRGLSDHASLDGQELGAQSRGRRGSDIGVRGGRHQRSVSL.

Residues 1–57 (MADLKKAAGGRETPQGELRSEVVEDEGPRSPVAEEPGGSGSNSSETKLSPREEEELD) form a disordered region. At Thr13 the chain carries Phosphothreonine. Residues 18–28 (LRSEVVEDEGP) are compositionally biased toward basic and acidic residues. A phosphoserine mark is found at Ser30 and Ser49. 2 coiled-coil regions span residues 59 to 140 (RIQE…YERA) and 169 to 272 (WQEM…EQIH). The segment at 275–332 (RRGLPPHPLGPRRSSPVGAEAGPEGIEDGDSGIEGAEGGGLEEGSSLGPGPGPDTDTL) is disordered. A compositionally biased stretch (low complexity) spans 317–332 (EGSSLGPGPGPDTDTL). Ser342, Ser349, Ser357, Ser361, and Ser377 each carry phosphoserine. The segment at 364–392 (GQELGAQSRGRRGSDIGVRGGRHQRSVSL) is disordered. Positions 383 to 392 (GGRHQRSVSL) are enriched in basic residues.

This sequence belongs to the SH3BP5 family.

Functionally, functions as a guanine nucleotide exchange factor (GEF) for RAB11A. The sequence is that of SH3 domain-binding protein 5-like (Sh3bp5l) from Mus musculus (Mouse).